A 568-amino-acid polypeptide reads, in one-letter code: Sulfite reductase [NADPH] hemoprotein beta-component (568 aa).

Cysteine 425, cysteine 431, cysteine 470, and cysteine 474 together coordinate [4Fe-4S] cluster. Cysteine 474 contributes to the siroheme binding site.

It belongs to the nitrite and sulfite reductase 4Fe-4S domain family. As to quaternary structure, alpha(8)-beta(8). The alpha component is a flavoprotein, the beta component is a hemoprotein. It depends on siroheme as a cofactor. [4Fe-4S] cluster serves as cofactor.

The enzyme catalyses hydrogen sulfide + 3 NADP(+) + 3 H2O = sulfite + 3 NADPH + 4 H(+). Its pathway is sulfur metabolism; hydrogen sulfide biosynthesis; hydrogen sulfide from sulfite (NADPH route): step 1/1. Component of the sulfite reductase complex that catalyzes the 6-electron reduction of sulfite to sulfide. This is one of several activities required for the biosynthesis of L-cysteine from sulfate. The chain is Sulfite reductase [NADPH] hemoprotein beta-component from Xanthomonas euvesicatoria pv. vesicatoria (strain 85-10) (Xanthomonas campestris pv. vesicatoria).